A 338-amino-acid chain; its full sequence is Glycerol-3-phosphate dehydrogenase [NAD(P)+] (338 aa).

Positions 14, 15, 35, and 109 each coordinate NADPH. Lys109, Gly138, and Thr140 together coordinate sn-glycerol 3-phosphate. NADPH is bound at residue Ala142. Positions 194, 247, 257, 258, and 259 each coordinate sn-glycerol 3-phosphate. Lys194 serves as the catalytic Proton acceptor. Residue Arg258 coordinates NADPH. Val282 and Glu284 together coordinate NADPH.

The protein belongs to the NAD-dependent glycerol-3-phosphate dehydrogenase family.

It is found in the cytoplasm. It catalyses the reaction sn-glycerol 3-phosphate + NAD(+) = dihydroxyacetone phosphate + NADH + H(+). The enzyme catalyses sn-glycerol 3-phosphate + NADP(+) = dihydroxyacetone phosphate + NADPH + H(+). It functions in the pathway membrane lipid metabolism; glycerophospholipid metabolism. Functionally, catalyzes the reduction of the glycolytic intermediate dihydroxyacetone phosphate (DHAP) to sn-glycerol 3-phosphate (G3P), the key precursor for phospholipid synthesis. The sequence is that of Glycerol-3-phosphate dehydrogenase [NAD(P)+] from Shewanella frigidimarina (strain NCIMB 400).